An 89-amino-acid polypeptide reads, in one-letter code: Small ribosomal subunit protein uS15 (89 aa).

It belongs to the universal ribosomal protein uS15 family. As to quaternary structure, part of the 30S ribosomal subunit. Forms a bridge to the 50S subunit in the 70S ribosome, contacting the 23S rRNA.

Its function is as follows. One of the primary rRNA binding proteins, it binds directly to 16S rRNA where it helps nucleate assembly of the platform of the 30S subunit by binding and bridging several RNA helices of the 16S rRNA. Forms an intersubunit bridge (bridge B4) with the 23S rRNA of the 50S subunit in the ribosome. The protein is Small ribosomal subunit protein uS15 of Rhizobium rhizogenes (strain K84 / ATCC BAA-868) (Agrobacterium radiobacter).